Reading from the N-terminus, the 85-residue chain is MDPKKIARINELAKKKKTEGLTPEEKVEQAKLREEYIEGYRRAVRHHIEGIKIVDEEGNDVTPEKLRQVQREKGLHGRSLDDPNS.

The segment at 62-85 (TPEKLRQVQREKGLHGRSLDDPNS) is disordered.

The protein belongs to the UPF0291 family.

Its subcellular location is the cytoplasm. In Streptococcus pneumoniae serotype 4 (strain ATCC BAA-334 / TIGR4), this protein is UPF0291 protein SP_1473.